A 54-amino-acid chain; its full sequence is Large ribosomal subunit protein bL33 (54 aa).

Belongs to the bacterial ribosomal protein bL33 family.

This chain is Large ribosomal subunit protein bL33, found in Chloroflexus aggregans (strain MD-66 / DSM 9485).